Consider the following 547-residue polypeptide: MFLSPSAAMHDKILILDFGSQVTQLIARRVREAHVYCEIHPNDVSDDFVREFAPKGVILSGSHASTYEDHQLRAPQAVWDLGVPVLGICYGMQTMAVQLGGKVEWSDHREFGYAEVRAHGRTRLLDGIQDFATPEGHGMLKVWMSHGDKVGEMPPGFALMASTPSCPIAGMADEARGYYAVQFHPEVTHTVQGRKLLERFVLDIAGAKPDWIMRDHIEEAVARIREQVGDEEVILGLSGGVDSSVAAALIHRAIGDQLTCVFVDHGLLRLNEGKMVLDMFEGRLHAKVVHVDASEQFLGHLAGVADPEHKRKIIGREFVEVFQAEAKKLTNAKWLAQGTIYPDVIESGGAKTKKATTIKSHHNVGGLPETLGLKLLEPLRDLFKDEVRELGVALGLPAEMVYRHPFPGPGLGVRILGEVKRDYAELLRRADAIFIEELCGTLATEQDAAAGLCEPSQVGKSWYDLTSQAFAVFLPVKSVGVMGDGRTYDYVAALRAVQTTDFMTAHWAHLPYALLGRASNRIINEVRGINRVVYDVSGKPPATIEWE.

The region spanning 12 to 210 (KILILDFGSQ…VLDIAGAKPD (199 aa)) is the Glutamine amidotransferase type-1 domain. Residue C89 is the Nucleophile of the active site. Active-site residues include H184 and E186. Residues 211 to 403 (WIMRDHIEEA…LGLPAEMVYR (193 aa)) form the GMPS ATP-PPase domain. 238 to 244 (SGGVDSS) contributes to the ATP binding site.

In terms of assembly, homodimer.

It carries out the reaction XMP + L-glutamine + ATP + H2O = GMP + L-glutamate + AMP + diphosphate + 2 H(+). It functions in the pathway purine metabolism; GMP biosynthesis; GMP from XMP (L-Gln route): step 1/1. Functionally, catalyzes the synthesis of GMP from XMP. In Burkholderia pseudomallei (strain 1710b), this protein is GMP synthase [glutamine-hydrolyzing].